We begin with the raw amino-acid sequence, 472 residues long: Uronate isomerase (472 aa).

The protein belongs to the metallo-dependent hydrolases superfamily. Uronate isomerase family.

The enzyme catalyses D-glucuronate = D-fructuronate. The catalysed reaction is aldehydo-D-galacturonate = keto-D-tagaturonate. Its pathway is carbohydrate metabolism; pentose and glucuronate interconversion. The sequence is that of Uronate isomerase from Shouchella clausii (strain KSM-K16) (Alkalihalobacillus clausii).